A 306-amino-acid polypeptide reads, in one-letter code: Mycothiol acetyltransferase (306 aa).

N-acetyltransferase domains lie at 5–157 and 159–306; these read EIYE…EPAA and ITIR…HKKL. 1D-myo-inositol 2-(L-cysteinylamino)-2-deoxy-alpha-D-glucopyranoside is bound at residue Glu36. 82 to 84 lines the acetyl-CoA pocket; the sequence is MLV. 1D-myo-inositol 2-(L-cysteinylamino)-2-deoxy-alpha-D-glucopyranoside contacts are provided by Asp186, Lys227, and Glu238. 242 to 244 is an acetyl-CoA binding site; sequence LGV. Residue Tyr276 coordinates 1D-myo-inositol 2-(L-cysteinylamino)-2-deoxy-alpha-D-glucopyranoside. 281 to 286 serves as a coordination point for acetyl-CoA; it reads NVRAVR.

This sequence belongs to the acetyltransferase family. MshD subfamily. As to quaternary structure, monomer.

It carries out the reaction 1D-myo-inositol 2-(L-cysteinylamino)-2-deoxy-alpha-D-glucopyranoside + acetyl-CoA = mycothiol + CoA + H(+). Functionally, catalyzes the transfer of acetyl from acetyl-CoA to desacetylmycothiol (Cys-GlcN-Ins) to form mycothiol. This Stackebrandtia nassauensis (strain DSM 44728 / CIP 108903 / NRRL B-16338 / NBRC 102104 / LLR-40K-21) protein is Mycothiol acetyltransferase.